The primary structure comprises 616 residues: uncharacterized protein (616 aa).

The protein belongs to the UbiD family.

This is an uncharacterized protein from Helicobacter pylori (strain ATCC 700392 / 26695) (Campylobacter pylori).